Reading from the N-terminus, the 97-residue chain is Anti-sigma-YlaC factor YlaD (97 aa).

3 residues coordinate Zn(2+): His-29, Cys-33, and Cys-36. Residues 71-93 (YYGLLIMKAACWFGAAVAMMLII) form a helical membrane-spanning segment.

This sequence belongs to the zinc-associated anti-sigma factor (ZAS) superfamily. The cofactor is Zn(2+).

It localises to the cell membrane. Anti-sigma factor for YlaC. The polypeptide is Anti-sigma-YlaC factor YlaD (ylaD) (Bacillus subtilis (strain 168)).